We begin with the raw amino-acid sequence, 194 residues long: Mu-like prophage FluMu protein gp37 (194 aa).

To phage Mu protein gp37.

This Haemophilus influenzae (strain ATCC 51907 / DSM 11121 / KW20 / Rd) protein is Mu-like prophage FluMu protein gp37.